The sequence spans 290 residues: Triplex capsid protein 1 (290 aa).

Belongs to the herpesviridae TRX1 protein family. In terms of assembly, interacts with TRX2, MCP and capsid vertex component 2/CVC2.

Its subcellular location is the virion. It localises to the host nucleus. In terms of biological role, structural component of the T=16 icosahedral capsid. The capsid is composed of pentamers and hexamers of major capsid protein/MCP, which are linked together by heterotrimers called triplexes. These triplexes are formed by a single molecule of triplex protein 1/TRX1 and two copies of triplex protein 2/TRX2. Additionally, TRX1 is required for efficient transport of TRX2 to the nucleus, which is the site of capsid assembly. In Human cytomegalovirus (strain AD169) (HHV-5), this protein is Triplex capsid protein 1.